The primary structure comprises 380 residues: Succinyl-diaminopimelate desuccinylase (380 aa).

Residue His69 coordinates Zn(2+). The active site involves Asp71. A Zn(2+)-binding site is contributed by Asp102. Glu135 acts as the Proton acceptor in catalysis. Residues Glu136, Glu164, and His353 each coordinate Zn(2+).

The protein belongs to the peptidase M20A family. DapE subfamily. Homodimer. The cofactor is Zn(2+). Co(2+) serves as cofactor.

The catalysed reaction is N-succinyl-(2S,6S)-2,6-diaminopimelate + H2O = (2S,6S)-2,6-diaminopimelate + succinate. The protein operates within amino-acid biosynthesis; L-lysine biosynthesis via DAP pathway; LL-2,6-diaminopimelate from (S)-tetrahydrodipicolinate (succinylase route): step 3/3. Its function is as follows. Catalyzes the hydrolysis of N-succinyl-L,L-diaminopimelic acid (SDAP), forming succinate and LL-2,6-diaminopimelate (DAP), an intermediate involved in the bacterial biosynthesis of lysine and meso-diaminopimelic acid, an essential component of bacterial cell walls. The sequence is that of Succinyl-diaminopimelate desuccinylase from Cereibacter sphaeroides (strain ATCC 17029 / ATH 2.4.9) (Rhodobacter sphaeroides).